A 233-amino-acid chain; its full sequence is Glutathione S-transferase 2 (233 aa).

Residues 17–101 (QKMIIYDTPA…YIDALDGTPT (85 aa)) enclose the GST N-terminal domain. Glutathione is bound by residues Y29, H58, V72, 85–86 (EC), and H133. Residues 106–233 (TPLEKGVIHM…KLLEIRSKSS (128 aa)) enclose the GST C-terminal domain.

Belongs to the GST superfamily. As to quaternary structure, homodimer.

The enzyme catalyses RX + glutathione = an S-substituted glutathione + a halide anion + H(+). The polypeptide is Glutathione S-transferase 2 (GTT2) (Saccharomyces cerevisiae (strain ATCC 204508 / S288c) (Baker's yeast)).